We begin with the raw amino-acid sequence, 300 residues long: Probable alpha-L-glutamate ligase (300 aa).

One can recognise an ATP-grasp domain in the interval 104–287 (LQLLARQGID…IAGRMIQWIE (184 aa)). Residues Lys-141, 178–179 (EY), Asp-187, and 211–213 (RSN) contribute to the ATP site. Residues Asp-248, Glu-260, and Asn-262 each coordinate Mg(2+). Mn(2+) is bound by residues Asp-248, Glu-260, and Asn-262.

Belongs to the RimK family. Mg(2+) is required as a cofactor. It depends on Mn(2+) as a cofactor.

In Citrobacter koseri (strain ATCC BAA-895 / CDC 4225-83 / SGSC4696), this protein is Probable alpha-L-glutamate ligase.